We begin with the raw amino-acid sequence, 700 residues long: E3 ubiquitin-protein ligase SspH1 (700 aa).

The interval 1-395 is interaction with target proteins; the sequence is MFNIRNTQPS…HSGIRIHFDM (395 aa). 8 LRR repeats span residues 217-238, 239-257, 258-279, 280-297, 298-319, 320-337, 338-360, and 361-381; these read HITT…PEGL, RELE…SLPQ, GLQK…PPGL, GDLA…EMPP, ALRE…PSGL, QKLW…EMSP, GLQE…TGLS, and SAAR…QALR. The linker stretch occupies residues 396–403; sequence AGPSVPRE. Residues 404 to 700 are E3 ubiquitin-protein ligase catalytic domain; sequence ARALHLAVAD…SYLTARWRLN (297 aa). One can recognise an NEL domain in the interval 406–700; sequence ALHLAVADWL…SYLTARWRLN (295 aa). The Glycyl thioester intermediate role is filled by cysteine 492.

Belongs to the LRR-containing bacterial E3 ligase family. As to quaternary structure, interacts (via leucine-rich repeat region) with host PKN1 (via the second REM repeat). In terms of processing, ubiquitinated in the presence of host E1 ubiquitin-activating enzyme, E2 ubiquitin-conjugating enzyme and ubiquitin.

It is found in the secreted. Its subcellular location is the host cytoplasm. The protein resides in the host nucleus. The catalysed reaction is S-ubiquitinyl-[E2 ubiquitin-conjugating enzyme]-L-cysteine + [acceptor protein]-L-lysine = [E2 ubiquitin-conjugating enzyme]-L-cysteine + N(6)-ubiquitinyl-[acceptor protein]-L-lysine.. With respect to regulation, exists in an autoinhibited state in the absence of substrate protein, due to interactions of the leucine-rich repeat domain with the catalytic domain. Is activated upon binding to a substrate protein. In terms of biological role, effector proteins function to alter host cell physiology and promote bacterial survival in host tissues. This protein is an E3 ubiquitin-protein ligase that interferes with the host's ubiquitination pathway and targets host proteins for proteasomal degradation. Can ubiquitinate ubiquitin, giving rise to polyubiquitin chains (in vitro). Polyubiquitinates host PKN1, leading to its proteasomal degradation. Down-modulates production of host pro-inflammatory cytokines by inhibiting NF-kappa-B-dependent gene expression; this depends only partially on its E3 ubiquitin-protein ligase activity. This is E3 ubiquitin-protein ligase SspH1 (sspH1) from Salmonella typhimurium (strain 14028s / SGSC 2262).